A 292-amino-acid polypeptide reads, in one-letter code: Ribosomal protein L11 methyltransferase (292 aa).

The S-adenosyl-L-methionine site is built by T145, G166, D188, and N229.

This sequence belongs to the methyltransferase superfamily. PrmA family.

It is found in the cytoplasm. It catalyses the reaction L-lysyl-[protein] + 3 S-adenosyl-L-methionine = N(6),N(6),N(6)-trimethyl-L-lysyl-[protein] + 3 S-adenosyl-L-homocysteine + 3 H(+). In terms of biological role, methylates ribosomal protein L11. The protein is Ribosomal protein L11 methyltransferase of Pseudoalteromonas atlantica (strain T6c / ATCC BAA-1087).